The primary structure comprises 344 residues: Arginine N-succinyltransferase (344 aa).

Leu-125 lines the succinyl-CoA pocket. His-229 (proton donor) is an active-site residue.

Belongs to the arginine N-succinyltransferase family.

It carries out the reaction succinyl-CoA + L-arginine = N(2)-succinyl-L-arginine + CoA + H(+). The protein operates within amino-acid degradation; L-arginine degradation via AST pathway; L-glutamate and succinate from L-arginine: step 1/5. In terms of biological role, catalyzes the transfer of succinyl-CoA to arginine to produce N(2)-succinylarginine. The protein is Arginine N-succinyltransferase of Escherichia coli O157:H7.